The sequence spans 89 residues: Large ribosomal subunit protein bL27 (89 aa).

The interval 1–24 (MAHKKAGGSSRNGRDSAGRRLGVK) is disordered.

Belongs to the bacterial ribosomal protein bL27 family.

The chain is Large ribosomal subunit protein bL27 from Maricaulis maris (strain MCS10) (Caulobacter maris).